We begin with the raw amino-acid sequence, 62 residues long: MVNVALLLDQIIATPLRSMVEAQQESANATVEFLTSLIDENGKPKGIELAYEQTVFDPERGL.

An N-terminal signal peptide occupies residues 1–22 (MVNVALLLDQIIATPLRSMVEA).

This is an uncharacterized protein from Archaeoglobus fulgidus (strain ATCC 49558 / DSM 4304 / JCM 9628 / NBRC 100126 / VC-16).